We begin with the raw amino-acid sequence, 184 residues long: ATP synthase subunit delta (184 aa).

Belongs to the ATPase delta chain family. In terms of assembly, F-type ATPases have 2 components, F(1) - the catalytic core - and F(0) - the membrane proton channel. F(1) has five subunits: alpha(3), beta(3), gamma(1), delta(1), epsilon(1). F(0) has three main subunits: a(1), b(2) and c(10-14). The alpha and beta chains form an alternating ring which encloses part of the gamma chain. F(1) is attached to F(0) by a central stalk formed by the gamma and epsilon chains, while a peripheral stalk is formed by the delta and b chains.

The protein resides in the cell membrane. Its function is as follows. F(1)F(0) ATP synthase produces ATP from ADP in the presence of a proton or sodium gradient. F-type ATPases consist of two structural domains, F(1) containing the extramembraneous catalytic core and F(0) containing the membrane proton channel, linked together by a central stalk and a peripheral stalk. During catalysis, ATP synthesis in the catalytic domain of F(1) is coupled via a rotary mechanism of the central stalk subunits to proton translocation. This protein is part of the stalk that links CF(0) to CF(1). It either transmits conformational changes from CF(0) to CF(1) or is implicated in proton conduction. This is ATP synthase subunit delta from Rickettsia africae (strain ESF-5).